The following is a 541-amino-acid chain: Glucose-6-phosphate isomerase (541 aa).

Catalysis depends on Glu346, which acts as the Proton donor. Residues His377 and Lys506 contribute to the active site.

The protein belongs to the GPI family.

The protein localises to the cytoplasm. It carries out the reaction alpha-D-glucose 6-phosphate = beta-D-fructose 6-phosphate. It participates in carbohydrate biosynthesis; gluconeogenesis. It functions in the pathway carbohydrate degradation; glycolysis; D-glyceraldehyde 3-phosphate and glycerone phosphate from D-glucose: step 2/4. In terms of biological role, catalyzes the reversible isomerization of glucose-6-phosphate to fructose-6-phosphate. This chain is Glucose-6-phosphate isomerase, found in Rhizobium leguminosarum bv. trifolii (strain WSM2304).